A 927-amino-acid polypeptide reads, in one-letter code: Translation initiation factor IF-2 (927 aa).

The segment at L27–F338 is disordered. Positions S49–K69 are enriched in polar residues. Composition is skewed to basic and acidic residues over residues T70–P86 and F101–H138. The span at G146–R159 shows a compositional bias: low complexity. 3 stretches are compositionally biased toward basic and acidic residues: residues N160–Q171, Y202–L226, and A234–V257. Residues N300–N316 are compositionally biased toward low complexity. One can recognise a tr-type G domain in the interval E428–K597. The segment at G437 to T444 is G1. G437–T444 is a binding site for GTP. Residues G462–H466 form a G2 region. Residues D483–G486 are G3. GTP-binding positions include D483 to H487 and N537 to D540. The tract at residues N537–D540 is G4. The G5 stretch occupies residues S573–K575.

Belongs to the TRAFAC class translation factor GTPase superfamily. Classic translation factor GTPase family. IF-2 subfamily.

It localises to the cytoplasm. Functionally, one of the essential components for the initiation of protein synthesis. Protects formylmethionyl-tRNA from spontaneous hydrolysis and promotes its binding to the 30S ribosomal subunits. Also involved in the hydrolysis of GTP during the formation of the 70S ribosomal complex. The sequence is that of Translation initiation factor IF-2 from Streptococcus agalactiae serotype Ia (strain ATCC 27591 / A909 / CDC SS700).